Consider the following 372-residue polypeptide: Putative KilA-N domain-containing protein L32 (372 aa).

Basic residues predominate over residues 1–12 (MPHKAPKSKLFR). The segment at 1-129 (MPHKAPKSKL…SDNDKSKDNF (129 aa)) is disordered. Over residues 14-36 (RYVEDSDDETRGRSRNRSVEKSR) the composition is skewed to basic and acidic residues. Positions 37–53 (SKSLTRSKSKSPKKSRS) are enriched in basic residues. A compositionally biased stretch (acidic residues) spans 79-120 (EDSEDSEDSESDQDDDKSDNEQSDSELDDSESDDDETDDNES). The region spanning 151–255 (KFAIGKFGDF…IKIGEWIEEW (105 aa)) is the KilA-N domain.

In Acanthamoeba polyphaga (Amoeba), this protein is Putative KilA-N domain-containing protein L32.